Here is a 397-residue protein sequence, read N- to C-terminus: tRNA (guanine-N(7)-)-methyltransferase non-catalytic subunit wuho (397 aa).

WD repeat units lie at residues 75 to 115 (KVEV…AQLL), 163 to 202 (GHLSIVYDVLWSEDQQYIITCDRDDKIRVTNYPATFDIHS), 206 to 244 (GHKEFVSGLAMLTEQHIISASGDKTLRVWNYTCGKELLL), and 303 to 343 (AGTW…RASG).

It belongs to the WD repeat TRM82 family. Forms a heterodimer with the catalytic subunit Mettl1. Interacts with mei-P26 and weakly interacts with bgcn; required for the function or formation of the mei-P26-bgcn-bam-sxl complex. Interacts with nanos; may be involved in mei-P26-dependent derepression of the BMP signaling pathway. Interacts with Myc; the interaction may be mediated by mei-P26 and may be involved in the regulation of ribosome biogenesis. In testis, it is present at high level in hub cells, a niche for germline stem cells of testis. Ubiquitously expressed in all testicular cells throughout spermatogenesis. Ubiquitously expressed in all germline and somatic cells of the ovary.

It is found in the nucleus. The protein localises to the cytoplasm. The protein operates within tRNA modification; N(7)-methylguanine-tRNA biosynthesis. In terms of biological role, required for the Mettl1-dependent formation of N(7)-methylguanine at position 46 (m7G46) in tRNA. In the Mettl1-wuho methyltransferase complex, it is required to stabilize and induce conformational changes of the catalytic subunit. Required for binding of nanos mRNA and repression of translation by the mei-P26-bgcn-bam-sxl complex. May cooperate with mei-P26 and nanos to derepress the BMP signaling pathway. May cooperate with mei-P26 to suppress expression of a subset of microRNAs. May cooperate with mei-P26 to regulate bam expression levels in germline cells during gametogenesis. Required to promote mitosis to meiosis transition during gametogenesis. May regulate germline cell division in part by regulating ribosome biogenesis. The polypeptide is tRNA (guanine-N(7)-)-methyltransferase non-catalytic subunit wuho (Drosophila persimilis (Fruit fly)).